Here is a 453-residue protein sequence, read N- to C-terminus: Glutamyl-tRNA(Gln) amidotransferase subunit A (453 aa).

Residues Lys-56 and Ser-131 each act as charge relay system in the active site. The active-site Acyl-ester intermediate is Ser-155.

This sequence belongs to the amidase family. GatA subfamily. As to quaternary structure, heterotrimer of A, B and C subunits.

It catalyses the reaction L-glutamyl-tRNA(Gln) + L-glutamine + ATP + H2O = L-glutaminyl-tRNA(Gln) + L-glutamate + ADP + phosphate + H(+). In terms of biological role, allows the formation of correctly charged Gln-tRNA(Gln) through the transamidation of misacylated Glu-tRNA(Gln) in organisms which lack glutaminyl-tRNA synthetase. The reaction takes place in the presence of glutamine and ATP through an activated gamma-phospho-Glu-tRNA(Gln). The chain is Glutamyl-tRNA(Gln) amidotransferase subunit A from Campylobacter fetus subsp. fetus (strain 82-40).